We begin with the raw amino-acid sequence, 431 residues long: Adenylosuccinate synthetase (431 aa).

Residues 12–18 and 40–42 contribute to the GTP site; these read GDEGKGK and GHT. The active-site Proton acceptor is D13. Residues D13 and G40 each contribute to the Mg(2+) site. Residues 13–16, 38–41, T131, R145, Q225, T240, and R304 each bind IMP; these read DEGK and NAGH. H41 serves as the catalytic Proton donor. 300–306 contributes to the substrate binding site; it reads TNTGRRR. Residues R306, 332–334, and 414–416 contribute to the GTP site; these read KLD and STS.

Belongs to the adenylosuccinate synthetase family. In terms of assembly, homodimer. Mg(2+) serves as cofactor.

It is found in the cytoplasm. It carries out the reaction IMP + L-aspartate + GTP = N(6)-(1,2-dicarboxyethyl)-AMP + GDP + phosphate + 2 H(+). Its pathway is purine metabolism; AMP biosynthesis via de novo pathway; AMP from IMP: step 1/2. Its function is as follows. Plays an important role in the de novo pathway of purine nucleotide biosynthesis. Catalyzes the first committed step in the biosynthesis of AMP from IMP. This chain is Adenylosuccinate synthetase, found in Methylocella silvestris (strain DSM 15510 / CIP 108128 / LMG 27833 / NCIMB 13906 / BL2).